The primary structure comprises 101 residues: Putative pterin-4-alpha-carbinolamine dehydratase (101 aa).

The protein belongs to the pterin-4-alpha-carbinolamine dehydratase family.

It catalyses the reaction (4aS,6R)-4a-hydroxy-L-erythro-5,6,7,8-tetrahydrobiopterin = (6R)-L-erythro-6,7-dihydrobiopterin + H2O. This is Putative pterin-4-alpha-carbinolamine dehydratase from Rhizobium etli (strain ATCC 51251 / DSM 11541 / JCM 21823 / NBRC 15573 / CFN 42).